We begin with the raw amino-acid sequence, 388 residues long: Succinate--CoA ligase [ADP-forming] subunit beta (388 aa).

The ATP-grasp domain maps to 9–244 (KEILRKYGVT…LDEEDPAEIE (236 aa)). ATP is bound by residues lysine 46, 53–55 (GRG), glutamate 99, alanine 102, and glutamate 107. Residues asparagine 199 and aspartate 213 each contribute to the Mg(2+) site. Substrate-binding positions include asparagine 264 and 321–323 (GIM).

Belongs to the succinate/malate CoA ligase beta subunit family. Heterotetramer of two alpha and two beta subunits. Requires Mg(2+) as cofactor.

The catalysed reaction is succinate + ATP + CoA = succinyl-CoA + ADP + phosphate. The enzyme catalyses GTP + succinate + CoA = succinyl-CoA + GDP + phosphate. The protein operates within carbohydrate metabolism; tricarboxylic acid cycle; succinate from succinyl-CoA (ligase route): step 1/1. In terms of biological role, succinyl-CoA synthetase functions in the citric acid cycle (TCA), coupling the hydrolysis of succinyl-CoA to the synthesis of either ATP or GTP and thus represents the only step of substrate-level phosphorylation in the TCA. The beta subunit provides nucleotide specificity of the enzyme and binds the substrate succinate, while the binding sites for coenzyme A and phosphate are found in the alpha subunit. The sequence is that of Succinate--CoA ligase [ADP-forming] subunit beta from Janthinobacterium sp. (strain Marseille) (Minibacterium massiliensis).